Consider the following 330-residue polypeptide: Ribose-phosphate pyrophosphokinase (330 aa).

Residues 40-42 (DGE) and 99-100 (RQ) contribute to the ATP site. Mg(2+) contacts are provided by H133 and D174. K197 is a catalytic residue. D-ribose 5-phosphate-binding positions include R199, D223, and 227–231 (DTGGT).

It belongs to the ribose-phosphate pyrophosphokinase family. Class I subfamily. In terms of assembly, homohexamer. The cofactor is Mg(2+).

Its subcellular location is the cytoplasm. The enzyme catalyses D-ribose 5-phosphate + ATP = 5-phospho-alpha-D-ribose 1-diphosphate + AMP + H(+). It participates in metabolic intermediate biosynthesis; 5-phospho-alpha-D-ribose 1-diphosphate biosynthesis; 5-phospho-alpha-D-ribose 1-diphosphate from D-ribose 5-phosphate (route I): step 1/1. Involved in the biosynthesis of the central metabolite phospho-alpha-D-ribosyl-1-pyrophosphate (PRPP) via the transfer of pyrophosphoryl group from ATP to 1-hydroxyl of ribose-5-phosphate (Rib-5-P). The sequence is that of Ribose-phosphate pyrophosphokinase from Ureaplasma parvum serovar 3 (strain ATCC 700970).